Reading from the N-terminus, the 95-residue chain is Aspartyl/glutamyl-tRNA(Asn/Gln) amidotransferase subunit C (95 aa).

It belongs to the GatC family. Heterotrimer of A, B and C subunits.

The enzyme catalyses L-glutamyl-tRNA(Gln) + L-glutamine + ATP + H2O = L-glutaminyl-tRNA(Gln) + L-glutamate + ADP + phosphate + H(+). The catalysed reaction is L-aspartyl-tRNA(Asn) + L-glutamine + ATP + H2O = L-asparaginyl-tRNA(Asn) + L-glutamate + ADP + phosphate + 2 H(+). In terms of biological role, allows the formation of correctly charged Asn-tRNA(Asn) or Gln-tRNA(Gln) through the transamidation of misacylated Asp-tRNA(Asn) or Glu-tRNA(Gln) in organisms which lack either or both of asparaginyl-tRNA or glutaminyl-tRNA synthetases. The reaction takes place in the presence of glutamine and ATP through an activated phospho-Asp-tRNA(Asn) or phospho-Glu-tRNA(Gln). This chain is Aspartyl/glutamyl-tRNA(Asn/Gln) amidotransferase subunit C, found in Cereibacter sphaeroides (strain ATCC 17025 / ATH 2.4.3) (Rhodobacter sphaeroides).